A 346-amino-acid polypeptide reads, in one-letter code: Putative D-xylulose reductase (346 aa).

Residues Cys39, His64, and Glu150 each coordinate Zn(2+).

The protein belongs to the zinc-containing alcohol dehydrogenase family. Zn(2+) serves as cofactor.

It catalyses the reaction xylitol + NAD(+) = D-xylulose + NADH + H(+). This is Putative D-xylulose reductase from Rhizobium meliloti (strain 1021) (Ensifer meliloti).